We begin with the raw amino-acid sequence, 63 residues long: Large ribosomal subunit protein bL28 (63 aa).

Belongs to the bacterial ribosomal protein bL28 family.

The protein is Large ribosomal subunit protein bL28 of Dictyoglomus thermophilum (strain ATCC 35947 / DSM 3960 / H-6-12).